We begin with the raw amino-acid sequence, 523 residues long: Cytochrome P450 monooxygenase ple5B (523 aa).

The helical transmembrane segment at 16–33 (IAAAAAGSAVAVYKLLQL) threads the bilayer. Asn82, Asn103, Asn122, Asn295, Asn379, and Asn423 each carry an N-linked (GlcNAc...) asparagine glycan. Position 446 (Cys446) interacts with heme.

Belongs to the cytochrome P450 family. Heme is required as a cofactor.

The protein localises to the membrane. The protein operates within secondary metabolite biosynthesis; terpenoid biosynthesis. In terms of biological role, cytochrome P450 monooxygenase; part of the gene cluster that mediates the biosynthesis of pleuromutilin, a tricyclic diterpene showing antibacterial properties. The geranylgeranyl diphosphate (GGPP) synthase ple4 catalyzes the first step in pleuromutilin biosynthesis. GGPP is then substrate of the premutilin synthase (PS) ple3 to yield premutilin. Premutilin synthase is a bifunctional enzyme composed of the fusion of a class II diterpene cyclase (DTC) and a class I diterpene synthase (DTS), with the corresponding domains and active sites containing characteristic aspartate-rich motifs. GGPP is first converted to mutildienyl-diphosphate (MPP) at the class II DTC site. MPP is subsequently further cyclized at the class I DTS site, followed by a 1,5-hydride shift and addition of water prior to terminating deprotonation, to yield premutilin. The cytochrome P450 monooxygenases ple5 and ple6 hydroxylate premutilin at C-11 and C-3, respectively, producing 11-hydroxypremutilin and 3-hydroxypremutilin. The combination of the actions of both ple5 and ple6 leads to the production of 3,11-dihydroxypremutilin. The short chain dehydrogenase ple7 further converts 3,11-dihydroxypremutilin into mutilin. The acetyltransferase ple2 then acetylates mutilin to produce 14-O-acetylmutilin. Finally, the cytochrome P450 monooxygenase ple1 catalyzes hydroxylation on the alpha position of the acetyl side chain of 14-O-acetylmutilin to yield pleuromutilin. This is Cytochrome P450 monooxygenase ple5B from Rhodocybe pseudopiperita (Clitopilus pseudopiperitus).